A 270-amino-acid polypeptide reads, in one-letter code: Probable thioesterase BOA10 (270 aa).

This sequence belongs to the AMT4 thioesterase family.

The protein operates within polyketide biosynthesis. Functionally, probable thioesterase; part of the gene cluster B that mediates the biosynthesis of botcinic acid and its botcinin derivatives, acetate-derived polyketides that contribute to virulence when combined with the sesquiterpene botrydial. Botcinic acid and its derivatives have been shown to induce chlorosis and necrosis during host plant infection, but also have antifungal activities. Two polyketide synthases, BOA6 and BOA9, are involved in the biosynthesis of botcinins. BOA6 mediates the formation of the per-methylated tetraketide core by condensation of four units of malonyl-CoA with one unit of acetyl-CoA, which would be methylated in activated methylene groups to yield a bicyclic acid intermediate that could then either be converted to botrylactone derivatives or lose the starter acetate unit through a retro-Claisen type C-C bond cleavage to yield botcinin derivatives. The second polyketide synthase, BOA9, is probably required for the biosynthesis of the tetraketide side chain of botcinins. The methyltransferase (MT) domain within BOA6 is probably responsible for the incorporation of four methyl groups. The trans-enoyl reductase BOA5 might take over the enoyl reductase function of BOA6 that misses an ER domain. The monooxygenases BOA2, BOA3 and BOA4 might be involved in further hydroxylations at C4, C5 and C8, whereas BOA7, close to BOA9, could potentially be involved in the hydroxylation at C4 in the side chain of botcinins. The polypeptide is Probable thioesterase BOA10 (Botryotinia fuckeliana (strain B05.10) (Noble rot fungus)).